The sequence spans 374 residues: WAT1-related protein At1g60050 (374 aa).

10 consecutive transmembrane segments (helical) span residues Ile11–Ala31, Phe42–Tyr62, Ile82–Ser102, Ile107–Leu127, Ile145–Ile165, Trp194–Ile214, Val228–Glu248, Glu255–Ile275, Val292–Val312, and Leu315–Trp335. The region spanning Ala26 to Phe155 is the EamA domain.

It belongs to the drug/metabolite transporter (DMT) superfamily. Plant drug/metabolite exporter (P-DME) (TC 2.A.7.4) family.

The protein localises to the membrane. The polypeptide is WAT1-related protein At1g60050 (Arabidopsis thaliana (Mouse-ear cress)).